The primary structure comprises 357 residues: Dehydrogenase FUB6 (357 aa).

The protein belongs to the zinc-containing alcohol dehydrogenase family. Quinone oxidoreductase subfamily.

Its pathway is mycotoxin biosynthesis. Dehydrogenase; part of the gene cluster that mediates the biosynthesis of fusaric acid, a mycotoxin with low to moderate toxicity to animals and humans, but with high phytotoxic properties. L-aspartate is suggested as fusaric acid amino acid precursor that is activated and further processed to O-acetyl-L-homoserine by cluster enzymes aspartate kinase FUB3 and homoserine O-acetyltransferase FUB5, as well as enzymes of the primary metabolism. The polyketide synthase (PKS) FUB1 generates the triketide trans-2-hexenal which is presumptively released by the hydrolase FUB4 and linked to the NRPS-bound amino acid precursor by NAD(P)-dependent dehydrogenase FUB6. FUB1, FUB4, and the non-canonical NRPS Fub8 may form an enzyme complex. Further processing of the NRPS-bound intermediate might be carried out by FUB6 and the O-acetylhomoserine FUB7, enabling a spontaneous electrocyclization to close the carbon backbone of fusaric acid. Dihydrofusaric acid is likely to be released via reduction by the thioester reductase (TR) domain of FUB8 whereupon the final oxidation to fusaric acid may (also) be performed by the FMN-dependent dehydrogenase FUB9. The polypeptide is Dehydrogenase FUB6 (Gibberella moniliformis (strain M3125 / FGSC 7600) (Maize ear and stalk rot fungus)).